The following is a 99-amino-acid chain: Ubiquitin-related modifier 1 homolog 2 (99 aa).

Gly99 carries the post-translational modification 1-thioglycine. A Glycyl lysine isopeptide (Gly-Lys) (interchain with K-? in acceptor proteins) cross-link involves residue Gly99.

It belongs to the URM1 family. In terms of processing, C-terminal thiocarboxylation occurs in 2 steps, it is first acyl-adenylated (-COAMP) via the hesA/moeB/thiF part of the MOCS3 homolog, then thiocarboxylated (-COSH) via the rhodanese domain of the MOCS3 homolog.

It is found in the cytoplasm. Its pathway is tRNA modification; 5-methoxycarbonylmethyl-2-thiouridine-tRNA biosynthesis. Its function is as follows. Acts as a sulfur carrier required for 2-thiolation of mcm(5)S(2)U at tRNA wobble positions of cytosolic tRNA(Lys), tRNA(Glu) and tRNA(Gln). Serves as sulfur donor in tRNA 2-thiolation reaction by being thiocarboxylated (-COSH) at its C-terminus by MOCS3. The sulfur is then transferred to tRNA to form 2-thiolation of mcm(5)S(2)U. Also acts as a ubiquitin-like protein (UBL) that is covalently conjugated via an isopeptide bond to lysine residues of target proteins. The thiocarboxylated form serves as substrate for conjugation and oxidative stress specifically induces the formation of UBL-protein conjugates. The chain is Ubiquitin-related modifier 1 homolog 2 from Arabidopsis thaliana (Mouse-ear cress).